A 651-amino-acid chain; its full sequence is Macrolide export ATP-binding/permease protein MacB (651 aa).

Residues 2–239 (IEIVNVTKTY…PQMPQGGMEA (238 aa)) form the ABC transporter domain. Residue 38 to 45 (GASGSGKS) participates in ATP binding. The next 4 membrane-spanning stretches (helical) occupy residues 269–289 (FLSV…MALG), 532–552 (IAAI…LVSV), 589–609 (IIGI…AGWA), and 614–634 (MFSV…FGLW).

The protein belongs to the ABC transporter superfamily. Macrolide exporter (TC 3.A.1.122) family. As to quaternary structure, homodimer.

It is found in the cell inner membrane. Its function is as follows. Non-canonical ABC transporter that contains transmembrane domains (TMD), which form a pore in the inner membrane, and an ATP-binding domain (NBD), which is responsible for energy generation. Confers resistance against macrolides. In Chlorobaculum tepidum (strain ATCC 49652 / DSM 12025 / NBRC 103806 / TLS) (Chlorobium tepidum), this protein is Macrolide export ATP-binding/permease protein MacB.